Consider the following 507-residue polypeptide: Probable aldehyde dehydrogenase (507 aa).

219–225 (GFGVEAG) is an NAD(+) binding site. Residues Glu263 and Cys302 contribute to the active site.

Belongs to the aldehyde dehydrogenase family.

The catalysed reaction is an aldehyde + NAD(+) + H2O = a carboxylate + NADH + 2 H(+). The chain is Probable aldehyde dehydrogenase from Streptomyces coelicolor (strain ATCC BAA-471 / A3(2) / M145).